A 110-amino-acid chain; its full sequence is G antigen 2E (110 aa).

The tract at residues 1–110 (MSWRGRSTYY…NPEEVKTPEE (110 aa)) is disordered. Composition is skewed to acidic residues over residues 32–45 (FSDE…EEGE) and 87–96 (ECEDGPDGQE).

Belongs to the GAGE family.

The sequence is that of G antigen 2E (GAGE2E) from Homo sapiens (Human).